The sequence spans 250 residues: Probable transcriptional regulatory protein SYNAS_07390 (250 aa).

The protein belongs to the TACO1 family.

The protein localises to the cytoplasm. This Syntrophus aciditrophicus (strain SB) protein is Probable transcriptional regulatory protein SYNAS_07390.